The chain runs to 226 residues: Cytidylate kinase (226 aa).

An ATP-binding site is contributed by 10–18 (GPASSGKST).

This sequence belongs to the cytidylate kinase family. Type 1 subfamily.

It is found in the cytoplasm. It carries out the reaction CMP + ATP = CDP + ADP. It catalyses the reaction dCMP + ATP = dCDP + ADP. This chain is Cytidylate kinase, found in Streptococcus pyogenes serotype M5 (strain Manfredo).